Reading from the N-terminus, the 283-residue chain is Serine/threonine-protein phosphatase Pgam5, mitochondrial (283 aa).

The helical transmembrane segment at 7 to 23 (MYGLPSAAVAVGTALLN) threads the bilayer.

Belongs to the phosphoglycerate mutase family. BPG-dependent PGAM subfamily. As to quaternary structure, interacts with skn-1.

It localises to the mitochondrion outer membrane. It catalyses the reaction O-phospho-L-seryl-[protein] + H2O = L-seryl-[protein] + phosphate. The catalysed reaction is O-phospho-L-threonyl-[protein] + H2O = L-threonyl-[protein] + phosphate. Functionally, displays phosphatase activity for serine/threonine residues. Has apparently no phosphoglycerate mutase activity. The polypeptide is Serine/threonine-protein phosphatase Pgam5, mitochondrial (pgam-5) (Caenorhabditis briggsae).